Reading from the N-terminus, the 300-residue chain is tRNA pseudouridine synthase B (300 aa).

D38 (nucleophile) is an active-site residue.

Belongs to the pseudouridine synthase TruB family. Type 1 subfamily.

The catalysed reaction is uridine(55) in tRNA = pseudouridine(55) in tRNA. Functionally, responsible for synthesis of pseudouridine from uracil-55 in the psi GC loop of transfer RNAs. The polypeptide is tRNA pseudouridine synthase B (Dehalococcoides mccartyi (strain ATCC BAA-2266 / KCTC 15142 / 195) (Dehalococcoides ethenogenes (strain 195))).